The primary structure comprises 322 residues: tRNA dimethylallyltransferase (322 aa).

Residue 18 to 25 (GPTASGKS) participates in ATP binding. Residue 20–25 (TASGKS) participates in substrate binding. Interaction with substrate tRNA regions lie at residues 43-46 (DSRQ) and 167-171 (QRLVR).

It belongs to the IPP transferase family. Monomer. The cofactor is Mg(2+).

The catalysed reaction is adenosine(37) in tRNA + dimethylallyl diphosphate = N(6)-dimethylallyladenosine(37) in tRNA + diphosphate. Catalyzes the transfer of a dimethylallyl group onto the adenine at position 37 in tRNAs that read codons beginning with uridine, leading to the formation of N6-(dimethylallyl)adenosine (i(6)A). The polypeptide is tRNA dimethylallyltransferase (Chlorobium phaeobacteroides (strain BS1)).